Here is a 338-residue protein sequence, read N- to C-terminus: MAPIKVGINGFGRIGRIVFRNAVEHPDIEVVAVNDPFIETTYAAYMLKYDSSHGLFKGEVEVDGKDLVVNGKKVRFYTERNPADIKWSETGAEYVVESTGVFTTTEKAKAHLVGGAKKVIISAPSADAPMYVMGVNESDYDGSADVISNASCTTNCLAPLAKVINDNYGIVEGLMTTVHSYTATQKTVDGPSAKDWRGGRGAAQNIIPSSTGAAKAVGKVIPALNGKLTGMSIRVPTANVSVVDLTVRIEKGASYEEITETIKKAADGPLKGVLAYTGDDVVSSDMLGNTNSSIFDIKAGISLNKNFVKLVSWYDNEWGYSRRVLDLLAHVAKVDASK.

Residues 13-14 (RI), Asp-35, and Arg-80 contribute to the NAD(+) site. D-glyceraldehyde 3-phosphate is bound by residues 151–153 (SCT), Thr-182, 211–212 (TG), and Arg-234. Catalysis depends on Cys-152, which acts as the Nucleophile. An NAD(+)-binding site is contributed by Asn-316.

Belongs to the glyceraldehyde-3-phosphate dehydrogenase family. As to quaternary structure, homotetramer.

It localises to the cytoplasm. It catalyses the reaction D-glyceraldehyde 3-phosphate + phosphate + NAD(+) = (2R)-3-phospho-glyceroyl phosphate + NADH + H(+). It functions in the pathway carbohydrate degradation; glycolysis; pyruvate from D-glyceraldehyde 3-phosphate: step 1/5. With respect to regulation, inhibited by koningic acid through the interaction of cysteine residues with koningic acid even at very low concentrations. In Trichoderma koningii (Hypocrea koningii), this protein is Glyceraldehyde-3-phosphate dehydrogenase 2 (gpd2).